The chain runs to 1000 residues: C2 domain-containing protein 5 (1000 aa).

In terms of domain architecture, C2 spans 1 to 109; it reads MPGKLKVKIV…EAATVISGWF (109 aa). Ca(2+) contacts are provided by D19, D26, D76, D78, S81, and D84. Phosphoserine; by PKB/AKT2 is present on S197. A phosphoserine mark is found at S200 and S260. Residues 265-330 form a disordered region; that stretch reads MKEIPFNEDP…SGSAGKEGGP (66 aa). A compositionally biased stretch (polar residues) spans 274-289; the sequence is PNPNTHSSGPSTPLKN. A compositionally biased stretch (low complexity) spans 290-318; it reads QTYSFSPSKSYSRQSSSSDTDLSLTPKTG. A phosphoserine mark is found at S293, S295, S304, S305, and S306. Position 317 is a phosphothreonine (T317). Residues 319 to 328 are compositionally biased toward gly residues; it reads MGSGSAGKEG. At S323 the chain carries Phosphoserine. T601 is modified (phosphothreonine). Residues 639 to 669 are disordered; it reads EIIGSPIPEPRQRSRLLRSQSESSDEVTELD. Residues S643, S657, S659, S661, and S662 each carry the phosphoserine modification. Residue T666 is modified to Phosphothreonine. S671 is modified (phosphoserine). Position 807 is a phosphothreonine (T807). 2 positions are modified to phosphoserine: S817 and S852.

It depends on Ca(2+) as a cofactor. Phosphorylated on Ser-197 by active myristoylated kinase AKT2; insulin-stimulated phosphorylation by AKT2 regulates SLC2A4/GLUT4 translocation into the plasma membrane.

The protein resides in the cytoplasmic vesicle membrane. Its subcellular location is the cytoplasm. It is found in the cell cortex. It localises to the cell membrane. The protein localises to the cell projection. The protein resides in the ruffle. Functionally, required for insulin-stimulated glucose transport and glucose transporter SLC2A4/GLUT4 translocation from intracellular glucose storage vesicle (GSV) to the plasma membrane (PM) in adipocytes. Binds phospholipid membranes in a calcium-dependent manner and is necessary for the optimal membrane fusion between SLC2A4/GLUT4 GSV and the PM. This chain is C2 domain-containing protein 5 (C2CD5), found in Homo sapiens (Human).